The following is a 626-amino-acid chain: uncharacterized protein (626 aa).

The helical transmembrane segment at 103-123 (AGALLVKFFPLLLLYPLTYLA) threads the bilayer. The Protein kinase domain maps to 200-618 (FENREPVGSG…DILEAARPFL (419 aa)). ATP contacts are provided by residues 206-214 (VGSGCVAQV) and lysine 311. The Proton acceptor role is filled by aspartate 445.

This sequence belongs to the protein kinase superfamily. ADCK protein kinase family.

Its subcellular location is the mitochondrion. It is found in the membrane. Its function is as follows. The function of this protein is not yet clear. It is not known if it has protein kinase activity and what type of substrate it would phosphorylate (Ser, Thr or Tyr). Involved in the mitochondrial import of CoQ precursors, plays a role in muscle mitochondrial function and fatty acid beta-oxidation. This is an uncharacterized protein from Homo sapiens (Human).